Consider the following 310-residue polypeptide: GMP synthase [glutamine-hydrolyzing] subunit B (310 aa).

The GMPS ATP-PPase domain occupies 2 to 185; the sequence is FDAKSFIEES…LGLPEKIAHR (184 aa). 29 to 35 is a binding site for ATP; the sequence is SGGVDSS.

Heterodimer composed of a glutamine amidotransferase subunit (A) and a GMP-binding subunit (B).

It carries out the reaction XMP + L-glutamine + ATP + H2O = GMP + L-glutamate + AMP + diphosphate + 2 H(+). The protein operates within purine metabolism; GMP biosynthesis; GMP from XMP (L-Gln route): step 1/1. Functionally, catalyzes the synthesis of GMP from XMP. This Methanococcus vannielii (strain ATCC 35089 / DSM 1224 / JCM 13029 / OCM 148 / SB) protein is GMP synthase [glutamine-hydrolyzing] subunit B.